The sequence spans 90 residues: Acylphosphatase (90 aa).

The Acylphosphatase-like domain maps to 4 to 90; that stretch reads TRRVRFYGRV…TEFQDFQIKR (87 aa). Residues arginine 19 and asparagine 37 contribute to the active site.

Belongs to the acylphosphatase family.

It carries out the reaction an acyl phosphate + H2O = a carboxylate + phosphate + H(+). The chain is Acylphosphatase (acyP) from Thermoplasma volcanium (strain ATCC 51530 / DSM 4299 / JCM 9571 / NBRC 15438 / GSS1).